The chain runs to 940 residues: Mitogen-activated protein kinase kinase kinase 10 (940 aa).

Residues 16 to 81 form the SH3 domain; that stretch reads PAGPVWTAVF…PSNYVAPAAP (66 aa). One can recognise a Protein kinase domain in the interval 98-360; it reads LQLEEIIGVG…GSILKQLEVI (263 aa). ATP is bound by residues 104-112 and lysine 125; that span reads IGVGGFGKV. Residue aspartate 222 is the Proton acceptor of the active site. Threonine 258 carries the phosphothreonine; by autocatalysis modification. At serine 262 the chain carries Phosphoserine; by autocatalysis and MAP4K1. Leucine-zipper regions lie at residues 384–405 and 419–440; these read IQHMFDDLRTKEKELRSREEEL and LRRREQELAEREMDIVERELHL. Disordered regions lie at residues 490–599, 687–734, and 749–917; these read PTLD…MAPG, RAGD…GLAP, and STRS…QPTL. Phosphoserine occurs at positions 498, 502, and 506. A compositionally biased stretch (low complexity) spans 501 to 511; that stretch reads ASPPASPSIIP. Threonine 552 carries the phosphothreonine modification. Composition is skewed to basic and acidic residues over residues 560–572 and 687–698; these read QKERAGGEERLKA and RAGDGEEQRRWL. Residues 765–775 are compositionally biased toward pro residues; the sequence is APSPPPSPLAP. Residues 822–840 are compositionally biased toward basic and acidic residues; sequence LRQREPLELTNHGPRDPLD. Arginine 843 carries the post-translational modification Omega-N-methylarginine. Residues 899-913 are compositionally biased toward pro residues; sequence PSRPDTPESPGPPSV.

This sequence belongs to the protein kinase superfamily. STE Ser/Thr protein kinase family. MAP kinase kinase kinase subfamily. In terms of assembly, homodimer. Interacts with SH3RF2. Mg(2+) serves as cofactor. In terms of processing, autophosphorylation on serine and threonine residues within the activation loop plays a role in enzyme activation.

It catalyses the reaction L-seryl-[protein] + ATP = O-phospho-L-seryl-[protein] + ADP + H(+). It carries out the reaction L-threonyl-[protein] + ATP = O-phospho-L-threonyl-[protein] + ADP + H(+). Its activity is regulated as follows. Homodimerization via the leucine zipper domains is required for autophosphorylation and subsequent activation. Its function is as follows. Activates the JUN N-terminal pathway. This is Mitogen-activated protein kinase kinase kinase 10 (Map3k10) from Mus musculus (Mouse).